A 124-amino-acid polypeptide reads, in one-letter code: Mini zinc finger protein 4 (124 aa).

A ZF-HD dimerization-type; degenerate zinc finger spans residues 35–84; the sequence is YGECRRNHAARMGGHAVDGCREFLAEGEEGTGGALRCAACGCHRSFHRRV.

Homo- and heterodimers.

Its subcellular location is the cytoplasm. Its function is as follows. Inhibits zinc finger homeodomain (ZHD) transcription factors, by interacting with them to prevent both their nuclear localization and their DNA-binding properties. The sequence is that of Mini zinc finger protein 4 (MIF4) from Oryza sativa subsp. japonica (Rice).